The primary structure comprises 355 residues: Uroporphyrinogen decarboxylase (355 aa).

Residues Arg27–Arg31, Phe46, Asp77, Tyr154, Thr209, and His328 each bind substrate.

It belongs to the uroporphyrinogen decarboxylase family. As to quaternary structure, homodimer.

The protein resides in the cytoplasm. It carries out the reaction uroporphyrinogen III + 4 H(+) = coproporphyrinogen III + 4 CO2. Its pathway is porphyrin-containing compound metabolism; protoporphyrin-IX biosynthesis; coproporphyrinogen-III from 5-aminolevulinate: step 4/4. Catalyzes the decarboxylation of four acetate groups of uroporphyrinogen-III to yield coproporphyrinogen-III. The polypeptide is Uroporphyrinogen decarboxylase (Vibrio vulnificus (strain CMCP6)).